We begin with the raw amino-acid sequence, 788 residues long: Multi-functional prenyltransferase ltmE (788 aa).

Positions 18 and 51 each coordinate substrate. Asp-58 contacts Mg(2+). Substrate-binding residues include Arg-67, Lys-151, Thr-152, Gln-182, Asn-189, and Lys-199. Residues 283–337 (DTLDGDDLTRPSTITQHEQDDHVDRAAIDAKSDASGSSNKSLTPPETAPTTDTLS) form a disordered region. The segment covering 299–314 (HEQDDHVDRAAIDAKS) has biased composition (basic and acidic residues). The segment covering 316 to 337 (ASGSSNKSLTPPETAPTTDTLS) has biased composition (polar residues). Position 404–405 (404–405 (MA)) interacts with L-tryptophan. Arg-427, Arg-599, Lys-601, Tyr-603, and Tyr-687 together coordinate substrate.

The protein in the N-terminal section; belongs to the FPP/GGPP synthase family. This sequence in the C-terminal section; belongs to the tryptophan dimethylallyltransferase family. It depends on Mg(2+) as a cofactor.

Its pathway is secondary metabolite biosynthesis. Its function is as follows. Multi-functional prenyltransferase; part of the gene cluster that mediates the biosynthesis of lolitrems, indole-diterpene mycotoxins that are potent tremorgens in mammals, and are synthesized by clavicipitaceous fungal endophytes in association with their grass hosts. The geranylgeranyl diphosphate (GGPP) synthase ltmG is proposed to catalyze the first step in lolitrem biosynthesis. LtmG catalyzes a series of iterative condensations of isopentenyl diphosphate (IPP) with dimethylallyl diphosphate (DMAPP), geranyl diphosphate (GPP), and farnesyl diphosphate (FPP), to form GGPP. GGPP then condenses with indole-3-glycerol phosphate to form 3-geranylgeranylindole, an acyclic intermediate, to be incorporated into paxilline. Either ltmG or ltmC could be responsible for this step, as both are putative prenyl transferases. The FAD-dependent monooxygenase ltmM then catalyzes the epoxidation of the two terminal alkenes of the geranylgeranyl moiety, which is subsequently cyclized by ltmB, to paspaline. The cytochrome P450 monooxygenases ltmQ and ltmP can sequentially oxidize paspaline to terpendole E and terpendole F. Alternatively, ltmP converts paspaline to an intermediate which is oxidized by ltmQ to terpendole F. LtmF, ltmK, ltmE and ltmJ appear to be unique to the epichloe endophytes. The prenyltransferase ltmF is involved in the 27-hydroxyl-O-prenylation. The cytochrome P450 monooxygenase ltmK is required for the oxidative acetal ring formation. The multi-functional prenyltransferase ltmE is required for C20- and C21-prenylations of the indole ring of paspalanes and acts together with the cytochrome P450 monooxygenase ltmJ to yield lolitremanes by multiple oxidations and ring closures. The stereoisomer pairs of lolitriol and lolitrem N or lolitrem B and lolitrem F may be attributed to variations in the way in which ring closure can occur under the action of ltmJ. While the major product of this pathway is lolitrem B, the prenyl transferases and cytochrome P450 monooxygenases identified in this pathway have a remarkable versatility in their regio- and stereo-specificities to generate a diverse range of metabolites that are products of a metabolic grid rather than a linear pathway. This is Multi-functional prenyltransferase ltmE from Epichloe festucae var. lolii (Neotyphodium lolii).